The primary structure comprises 178 residues: ATP-dependent protease subunit HslV (178 aa).

T7 is an active-site residue. Na(+)-binding residues include G162, C165, and T168.

This sequence belongs to the peptidase T1B family. HslV subfamily. A double ring-shaped homohexamer of HslV is capped on each side by a ring-shaped HslU homohexamer. The assembly of the HslU/HslV complex is dependent on binding of ATP.

The protein resides in the cytoplasm. The enzyme catalyses ATP-dependent cleavage of peptide bonds with broad specificity.. Allosterically activated by HslU binding. Protease subunit of a proteasome-like degradation complex believed to be a general protein degrading machinery. This Burkholderia lata (strain ATCC 17760 / DSM 23089 / LMG 22485 / NCIMB 9086 / R18194 / 383) protein is ATP-dependent protease subunit HslV.